The sequence spans 807 residues: Enhancer of polycomb homolog 2 (807 aa).

Residues lysine 135, lysine 195, lysine 324, and lysine 362 each participate in a glycyl lysine isopeptide (Lys-Gly) (interchain with G-Cter in SUMO2) cross-link. The tract at residues 376–396 (DEFPQVLSPVSEPEEENDPDG) is disordered. Serine 538 carries the post-translational modification Phosphoserine. Low complexity predominate over residues 600 to 613 (QLQQKQQSQHSSQQ). 2 disordered regions span residues 600–628 (QLQQ…DCMS) and 645–673 (SAPV…QPSG). 2 stretches are compositionally biased toward polar residues: residues 614 to 628 (THPK…DCMS) and 657 to 673 (EQNT…QPSG). At serine 754 the chain carries Phosphoserine.

The protein belongs to the enhancer of polycomb family.

It localises to the nucleus. May play a role in transcription or DNA repair. This is Enhancer of polycomb homolog 2 (EPC2) from Homo sapiens (Human).